A 360-amino-acid chain; its full sequence is Glyceraldehyde-3-phosphate dehydrogenase (360 aa).

Residues 13–14 (RI), D35, and R82 contribute to the NAD(+) site. D-glyceraldehyde 3-phosphate is bound by residues 153-155 (SCT), T184, 213-214 (TG), and R236. C154 serves as the catalytic Nucleophile. N318 is a binding site for NAD(+).

This sequence belongs to the glyceraldehyde-3-phosphate dehydrogenase family. As to quaternary structure, homotetramer.

The enzyme catalyses D-glyceraldehyde 3-phosphate + phosphate + NAD(+) = (2R)-3-phospho-glyceroyl phosphate + NADH + H(+). Its pathway is carbohydrate degradation; glycolysis; pyruvate from D-glyceraldehyde 3-phosphate: step 1/5. Its function is as follows. Key enzyme in glycolysis that catalyzes the first step of the pathway by converting D-glyceraldehyde 3-phosphate (G3P) into 3-phospho-D-glyceroyl phosphate. Essential for the maintenance of cellular ATP levels and carbohydrate metabolism. This Atriplex nummularia (Old man saltbush) protein is Glyceraldehyde-3-phosphate dehydrogenase.